A 429-amino-acid polypeptide reads, in one-letter code: Serine hydroxymethyltransferase (429 aa).

Residues Leu-126 and 130-132 (GHL) contribute to the (6S)-5,6,7,8-tetrahydrofolate site. Residue Lys-235 is modified to N6-(pyridoxal phosphate)lysine. 359-361 (SPF) contributes to the (6S)-5,6,7,8-tetrahydrofolate binding site.

This sequence belongs to the SHMT family. In terms of assembly, homodimer. Pyridoxal 5'-phosphate is required as a cofactor.

It is found in the cytoplasm. The catalysed reaction is (6R)-5,10-methylene-5,6,7,8-tetrahydrofolate + glycine + H2O = (6S)-5,6,7,8-tetrahydrofolate + L-serine. It participates in one-carbon metabolism; tetrahydrofolate interconversion. The protein operates within amino-acid biosynthesis; glycine biosynthesis; glycine from L-serine: step 1/1. Functionally, catalyzes the reversible interconversion of serine and glycine with tetrahydrofolate (THF) serving as the one-carbon carrier. This reaction serves as the major source of one-carbon groups required for the biosynthesis of purines, thymidylate, methionine, and other important biomolecules. Also exhibits THF-independent aldolase activity toward beta-hydroxyamino acids, producing glycine and aldehydes, via a retro-aldol mechanism. This chain is Serine hydroxymethyltransferase, found in Synechococcus sp. (strain WH7803).